The following is a 170-amino-acid chain: Photosystem II extrinsic protein V (170 aa).

Residues 1–33 form the signal peptide; that stretch reads MASVFSSLRRSLKGLLVLIPVLIGLAVTSPAQA. Residues Cys70, Cys73, His74, and His125 each contribute to the heme c site.

This sequence belongs to the cytochrome c family. PsbV subfamily. As to quaternary structure, PSII is composed of 1 copy each of membrane proteins PsbA, PsbB, PsbC, PsbD, PsbE, PsbF, PsbH, PsbI, PsbJ, PsbK, PsbL, PsbM, PsbT, PsbX, PsbY, PsbZ, Psb30/Ycf12, peripheral proteins PsbO, CyanoQ (PsbQ), PsbU, PsbV and a large number of cofactors. It forms dimeric complexes. Heme c serves as cofactor.

It is found in the cellular thylakoid membrane. Functionally, one of the extrinsic, lumenal subunits of photosystem II (PSII). PSII is a light-driven water plastoquinone oxidoreductase, using light energy to abstract electrons from H(2)O, generating a proton gradient subsequently used for ATP formation. The extrinsic proteins stabilize the structure of photosystem II oxygen-evolving complex (OEC), the ion environment of oxygen evolution and protect the OEC against heat-induced inactivation. Low-potential cytochrome c that plays a role in the OEC of PSII. The chain is Photosystem II extrinsic protein V from Synechococcus sp. (strain CC9605).